The chain runs to 207 residues: GTP cyclohydrolase 1 (207 aa).

Zn(2+) contacts are provided by C94, H97, and C167.

It belongs to the GTP cyclohydrolase I family. As to quaternary structure, toroid-shaped homodecamer, composed of two pentamers of five dimers.

It carries out the reaction GTP + H2O = 7,8-dihydroneopterin 3'-triphosphate + formate + H(+). It functions in the pathway cofactor biosynthesis; 7,8-dihydroneopterin triphosphate biosynthesis; 7,8-dihydroneopterin triphosphate from GTP: step 1/1. This chain is GTP cyclohydrolase 1, found in Thermobifida fusca (strain YX).